A 369-amino-acid chain; its full sequence is DNA replication and repair protein RecF (369 aa).

Residue 30 to 37 (GINAQGKT) coordinates ATP.

It belongs to the RecF family.

The protein localises to the cytoplasm. Its function is as follows. The RecF protein is involved in DNA metabolism; it is required for DNA replication and normal SOS inducibility. RecF binds preferentially to single-stranded, linear DNA. It also seems to bind ATP. This chain is DNA replication and repair protein RecF, found in Macrococcus caseolyticus (strain JCSC5402) (Macrococcoides caseolyticum).